The chain runs to 172 residues: Gastrula zinc finger protein XlCGF51.1A (172 aa).

6 consecutive C2H2-type zinc fingers follow at residues 6–28, 34–56, 62–84, 90–112, 122–144, and 150–172; these read FSCSDCGARFTYRSLLRRHNKIH, LICSECGKPFTSESALTAHQRSH, FSCTDCEKCFAQRMHLIEHQRTH, FSCTVCGEMFTYRAQFSKHMLKH, LDCSHCGKHFTSRSDLTVHRKSH, and LQCSDCGKCFKYQSQLASHQRVH.

This sequence belongs to the krueppel C2H2-type zinc-finger protein family.

It localises to the nucleus. Functionally, may be involved in transcriptional regulation. This chain is Gastrula zinc finger protein XlCGF51.1A, found in Xenopus laevis (African clawed frog).